The following is a 251-amino-acid chain: Hydroxyacylglutathione hydrolase GloB (251 aa).

His53, His55, Asp57, His58, His110, and Asp127 together coordinate Zn(2+). Residues 136 to 138 (RLF), 165 to 167 (HEY), and 245 to 248 (RSKK) contribute to the substrate site. Residue His165 coordinates Zn(2+).

The protein belongs to the metallo-beta-lactamase superfamily. Glyoxalase II family. In terms of assembly, monomer. The cofactor is Zn(2+).

The catalysed reaction is an S-(2-hydroxyacyl)glutathione + H2O = a 2-hydroxy carboxylate + glutathione + H(+). It catalyses the reaction (R)-S-lactoylglutathione + H2O = (R)-lactate + glutathione + H(+). It participates in secondary metabolite metabolism; methylglyoxal degradation; (R)-lactate from methylglyoxal: step 2/2. With respect to regulation, is inhibited by Cu(2+). Its function is as follows. Type II glyoxalase that catalyzes the hydrolysis of (R)-S-lactoylglutathione to (R)-lactate and glutathione. Is more efficient than the isozyme GloC, and plays a major contribution to methylglyoxal (MG) detoxification in E.coli. The two isoenzymes have additive effects and ensure maximal MG degradation. This Escherichia coli (strain K12) protein is Hydroxyacylglutathione hydrolase GloB.